Here is a 394-residue protein sequence, read N- to C-terminus: Elongation factor Tu (394 aa).

The region spanning 10 to 204 is the tr-type G domain; the sequence is KPHVNIGTIG…AVDSYIPQPV (195 aa). The tract at residues 19 to 26 is G1; it reads GHVDHGKT. 19 to 26 serves as a coordination point for GTP; the sequence is GHVDHGKT. Thr26 lines the Mg(2+) pocket. Positions 60–64 are G2; the sequence is GITIS. The tract at residues 81 to 84 is G3; that stretch reads DCPG. Residues 81-85 and 136-139 each bind GTP; these read DCPGH and NKVD. Residues 136-139 are G4; sequence NKVD. Residues 174–176 are G5; sequence SAL.

It belongs to the TRAFAC class translation factor GTPase superfamily. Classic translation factor GTPase family. EF-Tu/EF-1A subfamily. As to quaternary structure, monomer.

It is found in the cytoplasm. It catalyses the reaction GTP + H2O = GDP + phosphate + H(+). In terms of biological role, GTP hydrolase that promotes the GTP-dependent binding of aminoacyl-tRNA to the A-site of ribosomes during protein biosynthesis. The chain is Elongation factor Tu from Rickettsia canadensis (strain McKiel).